We begin with the raw amino-acid sequence, 686 residues long: Phosphatidylinositol 4,5-bisphosphate-binding protein SLM1 (686 aa).

A disordered region spans residues 33–147 (RSMTSADHAN…KQLQGKNSLT (115 aa)). The span at 45-63 (QQQQQQQQQQQQQQQQQQQ) shows a compositional bias: low complexity. The span at 64–126 (SASFQNGSLT…PNIDSNTNVT (63 aa)) shows a compositional bias: polar residues. Over residues 133–144 (NNNNGKQLQGKN) the composition is skewed to low complexity. Phosphoserine is present on residues serine 145, serine 150, and serine 153. The segment covering 157–172 (SSLQRQRLAQQQQQQQ) has biased composition (low complexity). The disordered stretch occupies residues 157–176 (SSLQRQRLAQQQQQQQDPRS). Residues 296–381 (RLEDLRRDLI…FLHEAFDNLE (86 aa)) adopt a coiled-coil conformation. The region spanning 468–581 (YEIKSGFLER…WFDNLKILTS (114 aa)) is the PH domain. Residues 626–669 (VENDENDDINSNYVGSTVTPKLDNQTNTNTSMSSLPDTNDSELQ) form a disordered region. Polar residues predominate over residues 634–663 (INSNYVGSTVTPKLDNQTNTNTSMSSLPDT). Residues 673-678 (PNIYIQ) carry the PXIXIT-like, required for interaction with CNA1 and CNA2, and calcineurin-dependent dephosphorylation motif.

Heterodimer of SLM1-SLM2. Binds phosphatidylinositol 4,5-bisphosphate, which is required for function. Interacts with the TORC2 subunits AVO2, BIT61 and TOR2. Interacts with the calcineurin catalytic subunits CNA1 and CNA2. Phosphorylated by the target of rapamycin complex 2 (TORC2) and dephosphorylated by serine/threonine-protein phosphatase 2B (calcineurin). Dephosphorylated in response to the disruption or inhibition of sphingolipid synthesis.

It localises to the cell membrane. Functionally, together with SLM2, acts as an effector of the TORC2- and calcineurin-signaling pathways. Phosphorylated and activated by TORC2 under favorable growth conditions. Mediates actin polarization via inhibition of calcineurin-dependent transcription. Upon nutrient limitation or environmental stress, gets dephosphorylated by calcineurin. Dephosphorylation inhibits its interaction with TORC2, thereby antagonizing TORC2 signaling and mediating calcineurin-dependent actin depolarization. May play a role in the response to the disruption of sphingolipid synthesis, where dephosphorylation of SLM1 leads to the activation and phosphorylation of YPK1 through the TORC2 and PKH1 pathways, which in turn phosphorylates ORM1 and LAG1 to activate sphingolipid synthesis. Also functions in heat-induced, calcineurin-mediated uracil permease (FUR4) endocytosis. In Saccharomyces cerevisiae (strain ATCC 204508 / S288c) (Baker's yeast), this protein is Phosphatidylinositol 4,5-bisphosphate-binding protein SLM1 (SLM1).